A 239-amino-acid chain; its full sequence is Serine protease SplF (239 aa).

The first 36 residues, 1 to 36, serve as a signal peptide directing secretion; that stretch reads MNKNIIIKSIGALTILTSITGVGTTMVEGIQQTAKA. Catalysis depends on charge relay system residues histidine 75, aspartate 114, and serine 192.

It belongs to the peptidase S1B family.

The protein resides in the secreted. The sequence is that of Serine protease SplF (splF) from Staphylococcus aureus (strain USA300).